Reading from the N-terminus, the 606-residue chain is Protein couch potato (606 aa).

Positions isoleucine 81–glutamine 105 match the Nuclear localization signal motif. Repeat copies occupy residues proline 91–proline 95, alanine 109–leucine 113, proline 114–proline 118, proline 122–proline 126, proline 128–proline 132, proline 134–lysine 138, and proline 159–proline 163. The 7 X 5 AA approximate repeats of P-V-S-V-P stretch occupies residues proline 91–histidine 164. Disordered regions lie at residues glutamine 147–histidine 166, glutamine 282–alanine 311, valine 324–alanine 365, and proline 388–serine 410. Positions serine 344–alanine 365 are enriched in low complexity. Residues arginine 442–serine 524 form the RRM domain.

In terms of tissue distribution, expressed in neural precursors and their daughter cells in the embryonic peripheral nervous system. Less abundant in a number of glial cells in the peripheral and central nervous systems and also present at low levels in the developing gut.

It localises to the nucleus. May play a role in the development or function of the peripheral nervous system by regulating the processing of nervous system-specific transcripts. In Drosophila melanogaster (Fruit fly), this protein is Protein couch potato (cpo).